Reading from the N-terminus, the 198-residue chain is Large ribosomal subunit protein bL25 (198 aa).

This sequence belongs to the bacterial ribosomal protein bL25 family. CTC subfamily. As to quaternary structure, part of the 50S ribosomal subunit; part of the 5S rRNA/L5/L18/L25 subcomplex. Contacts the 5S rRNA. Binds to the 5S rRNA independently of L5 and L18.

Its function is as follows. This is one of the proteins that binds to the 5S RNA in the ribosome where it forms part of the central protuberance. The protein is Large ribosomal subunit protein bL25 of Bordetella avium (strain 197N).